The sequence spans 487 residues: Glycogen synthase (487 aa).

K20 is an ADP-alpha-D-glucose binding site.

The protein belongs to the glycosyltransferase 1 family. Bacterial/plant glycogen synthase subfamily.

It catalyses the reaction [(1-&gt;4)-alpha-D-glucosyl](n) + ADP-alpha-D-glucose = [(1-&gt;4)-alpha-D-glucosyl](n+1) + ADP + H(+). Its pathway is glycan biosynthesis; glycogen biosynthesis. Functionally, synthesizes alpha-1,4-glucan chains using ADP-glucose. This Aliivibrio fischeri (strain MJ11) (Vibrio fischeri) protein is Glycogen synthase.